The sequence spans 237 residues: Ribonuclease PH (237 aa).

Phosphate is bound by residues arginine 86 and 124 to 126 (GTR).

The protein belongs to the RNase PH family. Homohexameric ring arranged as a trimer of dimers.

It catalyses the reaction tRNA(n+1) + phosphate = tRNA(n) + a ribonucleoside 5'-diphosphate. Phosphorolytic 3'-5' exoribonuclease that plays an important role in tRNA 3'-end maturation. Removes nucleotide residues following the 3'-CCA terminus of tRNAs; can also add nucleotides to the ends of RNA molecules by using nucleoside diphosphates as substrates, but this may not be physiologically important. Probably plays a role in initiation of 16S rRNA degradation (leading to ribosome degradation) during starvation. This chain is Ribonuclease PH, found in Shewanella piezotolerans (strain WP3 / JCM 13877).